The chain runs to 380 residues: Phthiodiolone/phenolphthiodiolone dimycocerosates ketoreductase (380 aa).

Belongs to the mer family. Phthiodiolone/phenolphthiodiolone dimycocerosates ketoreductase subfamily.

Catalyzes the reduction of the keto moiety of phthiodiolone dimycocerosates (DIM B) and glycosylated phenolphthiodiolone dimycocerosates to form the intermediate compounds phthiotriol and glycosylated phenolphthiotriol dimycocerosates during phthiocerol dimycocerosates (DIM A) and glycosylated phenolphthiocerol dimycocerosates (PGL) biosynthesis. The protein is Phthiodiolone/phenolphthiodiolone dimycocerosates ketoreductase of Mycobacterium sp. (strain JLS).